Here is a 578-residue protein sequence, read N- to C-terminus: Dystrotelin (578 aa).

The ZZ-type zinc-finger motif lies at 223-279 (THPARCTLCRTFPITGLRYRCLKCLNFDICQMCFLSGLHSKSHQKSHPVIEHCIQMS). C228, C231, C243, C246, C252, C255, H265, and H269 together coordinate Zn(2+). The stretch at 322 to 351 (HHAQARLLKKQLNQYKDKLQAIYTSQEERI) forms a coiled coil. The interval 382–475 (RLQPPGPSSS…QSQTQKMPQK (94 aa)) is disordered. 2 stretches are compositionally biased toward basic and acidic residues: residues 399-410 (KVDHSSTEKVPK) and 431-451 (PKLDEVDRSHRSHTNAEHALR). Positions 455-472 (SPETTLHSTRAQSQTQKM) are enriched in polar residues. Positions 503-537 (ALAAVEKKEAGNIKERKDELEEEELQELLSKLMDA) form a coiled coil.

The protein localises to the cell membrane. This chain is Dystrotelin (DYTN), found in Homo sapiens (Human).